A 111-amino-acid polypeptide reads, in one-letter code: Nucleoid-associated protein SynRCC307_0025 (111 aa).

Belongs to the YbaB/EbfC family. Homodimer.

Its subcellular location is the cytoplasm. The protein resides in the nucleoid. In terms of biological role, binds to DNA and alters its conformation. May be involved in regulation of gene expression, nucleoid organization and DNA protection. The polypeptide is Nucleoid-associated protein SynRCC307_0025 (Synechococcus sp. (strain RCC307)).